The chain runs to 409 residues: Arginine deiminase (409 aa).

Catalysis depends on cysteine 399, which acts as the Amidino-cysteine intermediate.

Belongs to the arginine deiminase family.

It is found in the cytoplasm. It carries out the reaction L-arginine + H2O = L-citrulline + NH4(+). It participates in amino-acid degradation; L-arginine degradation via ADI pathway; carbamoyl phosphate from L-arginine: step 1/2. The polypeptide is Arginine deiminase (Streptococcus pneumoniae serotype 19F (strain G54)).